The following is a 287-amino-acid chain: Protease HtpX (287 aa).

The next 2 helical transmembrane spans lie at I4–I24 and L36–M56. Residue H143 participates in Zn(2+) binding. E144 is an active-site residue. H147 provides a ligand contact to Zn(2+). 2 consecutive transmembrane segments (helical) span residues L158 to V178 and M192 to I212. E221 provides a ligand contact to Zn(2+).

Belongs to the peptidase M48B family. Zn(2+) serves as cofactor.

The protein resides in the cell inner membrane. In Vibrio parahaemolyticus serotype O3:K6 (strain RIMD 2210633), this protein is Protease HtpX.